Here is a 305-residue protein sequence, read N- to C-terminus: UDP-3-O-acyl-N-acetylglucosamine deacetylase (305 aa).

Residues H78, H237, and D241 each coordinate Zn(2+). H264 serves as the catalytic Proton donor.

It belongs to the LpxC family. Zn(2+) serves as cofactor.

The enzyme catalyses a UDP-3-O-[(3R)-3-hydroxyacyl]-N-acetyl-alpha-D-glucosamine + H2O = a UDP-3-O-[(3R)-3-hydroxyacyl]-alpha-D-glucosamine + acetate. It participates in glycolipid biosynthesis; lipid IV(A) biosynthesis; lipid IV(A) from (3R)-3-hydroxytetradecanoyl-[acyl-carrier-protein] and UDP-N-acetyl-alpha-D-glucosamine: step 2/6. In terms of biological role, catalyzes the hydrolysis of UDP-3-O-myristoyl-N-acetylglucosamine to form UDP-3-O-myristoylglucosamine and acetate, the committed step in lipid A biosynthesis. The protein is UDP-3-O-acyl-N-acetylglucosamine deacetylase of Paraburkholderia xenovorans (strain LB400).